A 405-amino-acid polypeptide reads, in one-letter code: Envelope glycoprotein M (405 aa).

At 1–17 (MKSSKNDTFVYRTWVKT) the chain is on the intravirion side. Residues 18 to 38 (LVVYFVMFVMSAVVPITAMFP) traverse the membrane as a helical segment. At 39–76 (NLGYPCYFNALVDYGALNLTNYNLAHHLTPTLYLEPPE) the chain is on the virion surface side. The chain crosses the membrane as a helical span at residues 77 to 97 (MFVYITLVFIADCVAFIYYAC). The Intravirion segment spans residues 98-121 (GEVALIKARKKVSGLTDLSAWVSA). Residues 122–142 (VGSPTVLFLAILKLWSIQVFI) traverse the membrane as a helical segment. At 143-149 (QVLSYKH) the chain is on the virion surface side. A helical transmembrane segment spans residues 150-170 (VFLSAFVYFLHFLASVLHACA). Residues 171–192 (CVTRFSPVWVVKAQDNSIPQDT) lie on the Intravirion side of the membrane. The chain crosses the membrane as a helical span at residues 193 to 215 (FLWWVVFYLKPVVTNLYLGCLAL). At 216–245 (ETLVFSLSVFLALGNSFYFMVGDMVLGAVN) the chain is on the virion surface side. A helical transmembrane segment spans residues 246–266 (LFLILPIFWYILTEVWLASFL). Position 267 (R267) is a topological domain, intravirion. Residues 268–288 (HNFGFYCGMFIASIILILPLV) form a helical membrane-spanning segment. Over 289–299 (RYEAVFVSAKL) the chain is Virion surface. Residues 300-320 (HTTVAINVAIIPILCSVAMLI) traverse the membrane as a helical segment. Topologically, residues 321 to 405 (RICRIFKSMR…TTDSEEEIFP (85 aa)) are intravirion. Residues 346-405 (LESEPRPRPSRTPSPGRNRRRSSTSSSSSRSTRRQRPVSTQALVSSVLPMTTDSEEEIFP) form a disordered region. The segment covering 386–397 (QALVSSVLPMTT) has biased composition (polar residues).

The protein belongs to the herpesviridae glycoprotein M family. As to quaternary structure, interacts (via N-terminus) with gN (via N-terminus). The gM-gN heterodimer forms the gCII complex.

It is found in the virion membrane. The protein localises to the host Golgi apparatus. Its subcellular location is the host trans-Golgi network. It localises to the host endosome membrane. The protein resides in the host nucleus inner membrane. Its function is as follows. Envelope glycoprotein important for virion assembly and egress. Plays a role in the correct incorporation of gH-gL into virion membrane. Directs the glycoprotein N (gN) to the host trans-Golgi network. The sequence is that of Envelope glycoprotein M from Epstein-Barr virus (strain B95-8) (HHV-4).